Consider the following 347-residue polypeptide: UPF0324 membrane protein Atu0671 (347 aa).

The next 10 membrane-spanning stretches (helical) occupy residues 15 to 37 (LRWL…AAIL), 50 to 72 (WLGD…SLPV), 105 to 127 (AGGL…SYAA), 140 to 162 (LIAC…AIGA), 172 to 194 (AFTA…LLGL), 201 to 223 (IFAG…LGAV), 233 to 250 (LIRV…SVIH), 263 to 282 (MVPW…SFGL), 287 to 309 (LLSP…LGLS), and 322 to 344 (VIIA…ILLT).

This sequence belongs to the UPF0324 family.

It localises to the cell membrane. This Agrobacterium fabrum (strain C58 / ATCC 33970) (Agrobacterium tumefaciens (strain C58)) protein is UPF0324 membrane protein Atu0671.